The chain runs to 212 residues: 3-isopropylmalate dehydratase small subunit (212 aa).

This sequence belongs to the LeuD family. LeuD type 1 subfamily. As to quaternary structure, heterodimer of LeuC and LeuD.

It catalyses the reaction (2R,3S)-3-isopropylmalate = (2S)-2-isopropylmalate. It functions in the pathway amino-acid biosynthesis; L-leucine biosynthesis; L-leucine from 3-methyl-2-oxobutanoate: step 2/4. Functionally, catalyzes the isomerization between 2-isopropylmalate and 3-isopropylmalate, via the formation of 2-isopropylmaleate. The sequence is that of 3-isopropylmalate dehydratase small subunit from Thioalkalivibrio sulfidiphilus (strain HL-EbGR7).